The following is a 298-amino-acid chain: Protoheme IX farnesyltransferase (298 aa).

Transmembrane regions (helical) follow at residues 16–36 (VVALIVFTALVGMFLAIPDMP), 45–65 (ALGFLGIWLAASAAAAINQLL), 93–113 (VFAGVLIVISMTILVVWVNVI), 114–134 (TAVLTFASLIGYAVIYTVYLK), 141–161 (IVIGGLAGATPPMLGWAAVTG), 172–192 (SLLVLIIFIWTPPHFWALAIF), 218–238 (ILVYTVLLAIVTLAPVAVGMS), 241–261 (FYLGGAAVLNAVFLWYAWRML), and 277–297 (IVYLMALFAFLMVDHLLLPWV).

The protein belongs to the UbiA prenyltransferase family. Protoheme IX farnesyltransferase subfamily.

The protein localises to the cell inner membrane. The catalysed reaction is heme b + (2E,6E)-farnesyl diphosphate + H2O = Fe(II)-heme o + diphosphate. Its pathway is porphyrin-containing compound metabolism; heme O biosynthesis; heme O from protoheme: step 1/1. In terms of biological role, converts heme B (protoheme IX) to heme O by substitution of the vinyl group on carbon 2 of heme B porphyrin ring with a hydroxyethyl farnesyl side group. In Xanthomonas axonopodis pv. citri (strain 306), this protein is Protoheme IX farnesyltransferase.